A 262-amino-acid polypeptide reads, in one-letter code: Small ribosomal subunit protein uS2 (262 aa).

Residues 240 to 262 form a disordered region; sequence NLDEKEESQEAESTEENTTVESN. Residues 243-254 show a composition bias toward acidic residues; the sequence is EKEESQEAESTE.

The protein belongs to the universal ribosomal protein uS2 family.

The chain is Small ribosomal subunit protein uS2 from Staphylococcus haemolyticus (strain JCSC1435).